Here is a 430-residue protein sequence, read N- to C-terminus: Trigger factor (430 aa).

Residues 164–249 (DDWAVIDHEG…LKALKTRQLP (86 aa)) form the PPIase FKBP-type domain.

This sequence belongs to the FKBP-type PPIase family. Tig subfamily.

Its subcellular location is the cytoplasm. The enzyme catalyses [protein]-peptidylproline (omega=180) = [protein]-peptidylproline (omega=0). Involved in protein export. Acts as a chaperone by maintaining the newly synthesized protein in an open conformation. Functions as a peptidyl-prolyl cis-trans isomerase. The chain is Trigger factor from Anaeromyxobacter sp. (strain Fw109-5).